The following is a 501-amino-acid chain: Cryptochrome-1 (501 aa).

In terms of domain architecture, Photolyase/cryptochrome alpha/beta spans 5–134; it reads KKTIVWFRRD…SVQSYNGDLC (130 aa). Residues Y231 and 243–247 contribute to the FAD site; that span reads TSLLS. R356 provides a ligand contact to ATP. The FAD site is built by D386 and D388. Residue D405 participates in ATP binding.

This sequence belongs to the DNA photolyase class-1 family. In terms of assembly, homodimer. The cofactor is FAD. It depends on (6R)-5,10-methylene-5,6,7,8-tetrahydrofolate as a cofactor.

In terms of biological role, mediates blue light-induced gene expression in addition to its role in blue light-dependent inhibition of stem growth. This Sinapis alba (White mustard) protein is Cryptochrome-1 (PHR1).